Here is a 133-residue protein sequence, read N- to C-terminus: Large ribosomal subunit protein uL16c (133 aa).

This sequence belongs to the universal ribosomal protein uL16 family. Part of the 50S ribosomal subunit.

It localises to the plastid. The polypeptide is Large ribosomal subunit protein uL16c (Euglena longa (Euglenophycean alga)).